The sequence spans 185 residues: Elongation factor P (185 aa).

It belongs to the elongation factor P family.

The protein localises to the cytoplasm. It functions in the pathway protein biosynthesis; polypeptide chain elongation. Functionally, involved in peptide bond synthesis. Stimulates efficient translation and peptide-bond synthesis on native or reconstituted 70S ribosomes in vitro. Probably functions indirectly by altering the affinity of the ribosome for aminoacyl-tRNA, thus increasing their reactivity as acceptors for peptidyl transferase. The sequence is that of Elongation factor P from Microcystis aeruginosa (strain NIES-843 / IAM M-2473).